The primary structure comprises 512 residues: uncharacterized protein (512 aa).

This is an uncharacterized protein from Methanocaldococcus jannaschii (strain ATCC 43067 / DSM 2661 / JAL-1 / JCM 10045 / NBRC 100440) (Methanococcus jannaschii).